The sequence spans 98 residues: NADH-ubiquinone oxidoreductase chain 4L (98 aa).

3 helical membrane-spanning segments follow: residues 1–21 (MSIT…GMFV), 29–49 (SLLC…IVSL), and 61–81 (VILL…LIMV).

The protein belongs to the complex I subunit 4L family. As to quaternary structure, core subunit of respiratory chain NADH dehydrogenase (Complex I) which is composed of 45 different subunits.

It localises to the mitochondrion inner membrane. It carries out the reaction a ubiquinone + NADH + 5 H(+)(in) = a ubiquinol + NAD(+) + 4 H(+)(out). Functionally, core subunit of the mitochondrial membrane respiratory chain NADH dehydrogenase (Complex I) which catalyzes electron transfer from NADH through the respiratory chain, using ubiquinone as an electron acceptor. Part of the enzyme membrane arm which is embedded in the lipid bilayer and involved in proton translocation. This chain is NADH-ubiquinone oxidoreductase chain 4L (MT-ND4L), found in Ochotona princeps (Southern American pika).